Here is a 201-residue protein sequence, read N- to C-terminus: Retinol-binding protein 4 (201 aa).

An N-terminal signal peptide occupies residues 1–18 (MEWVWALVLLAALGSAQA). Disulfide bonds link C22–C178, C88–C192, and C138–C147. Position 116 (Q116) interacts with substrate. Position 139 is an omega-N-methylarginine (R139).

Belongs to the calycin superfamily. Lipocalin family. Interacts with TTR. Interaction with TTR prevents its loss by filtration through the kidney glomeruli. Interacts with STRA6.

Its subcellular location is the secreted. Functionally, retinol-binding protein that mediates retinol transport in blood plasma. Delivers retinol from the liver stores to the peripheral tissues. Transfers the bound all-trans retinol to STRA6, that then facilitates retinol transport across the cell membrane. This is Retinol-binding protein 4 (RBP4) from Sus scrofa (Pig).